The sequence spans 185 residues: Elongation factor P (185 aa).

Belongs to the elongation factor P family.

Its subcellular location is the cytoplasm. It functions in the pathway protein biosynthesis; polypeptide chain elongation. Involved in peptide bond synthesis. Stimulates efficient translation and peptide-bond synthesis on native or reconstituted 70S ribosomes in vitro. Probably functions indirectly by altering the affinity of the ribosome for aminoacyl-tRNA, thus increasing their reactivity as acceptors for peptidyl transferase. This chain is Elongation factor P, found in Geobacillus kaustophilus (strain HTA426).